We begin with the raw amino-acid sequence, 87 residues long: Sodium channel neurotoxin MeuNaTxalpha-5* (87 aa).

The N-terminal stretch at 1–19 is a signal peptide; sequence MNYLILISFALLVITGVES. Positions 21–85 constitute an LCN-type CS-alpha/beta domain; it reads RDAYIAKPHN…VPIRIPGKCH (65 aa). 4 disulfide bridges follow: Cys-31-Cys-84, Cys-35-Cys-57, Cys-43-Cys-67, and Cys-47-Cys-69. A propeptide spans 86–87 (removed by a carboxypeptidase); it reads RR.

The protein belongs to the long (4 C-C) scorpion toxin superfamily. Sodium channel inhibitor family. Alpha subfamily. As to expression, expressed by the venom gland.

It localises to the secreted. Its function is as follows. Alpha toxins bind voltage-independently at site-3 of sodium channels (Nav) and inhibit the inactivation of the activated channels, thereby blocking neuronal transmission. This toxin inhibits inactivation of Nav1.6/SCN8A (EC(50)=790 nM) and drosophila DmNav1 (EC(50)=280 nM). The toxin (1 uM) does not significantly shift the midpoint of activation at the two channels, but induces a significant depolarizing shift in the V(1/2) of inactivation of the channels. Has antimicrobial activity. This Mesobuthus eupeus (Lesser Asian scorpion) protein is Sodium channel neurotoxin MeuNaTxalpha-5*.